Here is a 44-residue protein sequence, read N- to C-terminus: MRDLKTYLSVAPVVSTLWFGALAGLLIEINRFFPDALIFPFFSF.

A helical membrane pass occupies residues 7–27 (YLSVAPVVSTLWFGALAGLLI).

It belongs to the PsaJ family.

Its subcellular location is the plastid. The protein localises to the chloroplast thylakoid membrane. Its function is as follows. May help in the organization of the PsaE and PsaF subunits. The sequence is that of Photosystem I reaction center subunit IX from Glycine max (Soybean).